The following is a 764-amino-acid chain: Nucleolar transcription factor 1 (764 aa).

M1 is subject to N-acetylmethionine. The tract at residues 1 to 21 (MNGEADCPTDLEMAAPKGQDR) is disordered. 2 consecutive DNA-binding regions (HMG box) follow at residues 112–180 (PKKP…ARFR) and 196–264 (PEKP…RDYI). T201 is modified (phosphothreonine). Residues S273, S336, and S364 each carry the phosphoserine modification. Residues 298–362 (TKPPPNSYSL…DYEVELLRFL (65 aa)) constitute a DNA-binding region (HMG box 3). Positions 370–379 (QQRVLGEEKM) are enriched in basic and acidic residues. Residues 370–411 (QQRVLGEEKMLNINKKQTTSPASKKPSQEGGKGGSEKPKRPV) form a disordered region. A phosphoserine mark is found at S389, S412, S433, S435, S484, S495, S546, S584, and S638. 3 DNA-binding regions (HMG box) span residues 407–475 (PKRP…GGER), 482–549 (PESP…SEMR), and 568–634 (KKPP…DLWV). Residues 456–488 (YKAREAALKAQSERKPGGEREDRGKLPESPKRA) form a disordered region. Positions 457–488 (KAREAALKAQSERKPGGEREDRGKLPESPKRA) are enriched in basic and acidic residues. Positions 546–576 (SEMRAPPAATNSSKKMKFQGEPKKPPMNGYQ) are disordered. The segment at 648 to 764 (YISNKRKNMT…SGDSSDSDSN (117 aa)) is disordered. The span at 664–674 (PKSSRTTLQSK) shows a compositional bias: polar residues. Residues 677–745 (SEEDDDEEDD…DDDEDEDNES (69 aa)) are compositionally biased toward acidic residues. The segment covering 746–758 (EGSSSSSSSSGDS) has biased composition (low complexity).

Homodimer. Part of Pol I pre-initiation complex (PIC), in which Pol I core assembles with RRN3 and promoter-bound UTBF and SL1/TIF-IB complex. Interacts with TOP2A in the context of Pol I complex. Interacts with TBP. Interacts with TAF1A. Interacts with PHF6. Interacts with CEBPA (isoform 1 and isoform 4). Interacts with DDX11. Interacts with NOP53. Interacts with RASL11A. Interacts with DHX33. Binds to IRS1 and PIK3CA. Interacts with ALKBH2. In terms of processing, phosphorylated and activated by PIK3CA.

The protein resides in the nucleus. The protein localises to the nucleolus. Functionally, recognizes the ribosomal RNA gene promoter and activates transcription mediated by RNA polymerase I through cooperative interactions with the transcription factor SL1/TIF-IB complex. It binds specifically to the upstream control element. In Rattus norvegicus (Rat), this protein is Nucleolar transcription factor 1 (Ubtf).